We begin with the raw amino-acid sequence, 258 residues long: Thiazole synthase (258 aa).

K100 acts as the Schiff-base intermediate with DXP in catalysis. Residues G161, 187 to 188 (AG), and 209 to 210 (NS) contribute to the 1-deoxy-D-xylulose 5-phosphate site.

The protein belongs to the ThiG family. Homotetramer. Forms heterodimers with either ThiH or ThiS.

Its subcellular location is the plastid. The protein localises to the chloroplast. It catalyses the reaction [ThiS sulfur-carrier protein]-C-terminal-Gly-aminoethanethioate + 2-iminoacetate + 1-deoxy-D-xylulose 5-phosphate = [ThiS sulfur-carrier protein]-C-terminal Gly-Gly + 2-[(2R,5Z)-2-carboxy-4-methylthiazol-5(2H)-ylidene]ethyl phosphate + 2 H2O + H(+). The protein operates within cofactor biosynthesis; thiamine diphosphate biosynthesis. Functionally, catalyzes the rearrangement of 1-deoxy-D-xylulose 5-phosphate (DXP) to produce the thiazole phosphate moiety of thiamine. Sulfur is provided by the thiocarboxylate moiety of the carrier protein ThiS. In vitro, sulfur can be provided by H(2)S. The sequence is that of Thiazole synthase from Cyanidioschyzon merolae (strain NIES-3377 / 10D) (Unicellular red alga).